A 180-amino-acid chain; its full sequence is UPF0227 protein YcfP (180 aa).

This sequence belongs to the UPF0227 family.

The polypeptide is UPF0227 protein YcfP (Salmonella arizonae (strain ATCC BAA-731 / CDC346-86 / RSK2980)).